The chain runs to 237 residues: Riboflavin kinase (237 aa).

Positions 1–23 (MSLPNPDNRPLLIGPPTGPEAPF) are disordered. Mg(2+)-binding residues include threonine 46 and asparagine 48. The disordered stretch occupies residues 82 to 126 (VLYQKPPTSEPVMMDPVQQQQQQQQQQRNQQQQQEGGVGSAQQEK). The span at 99–115 (QQQQQQQQQQRNQQQQQ) shows a compositional bias: low complexity. The active-site Nucleophile is glutamate 158.

This sequence belongs to the flavokinase family. The cofactor is Zn(2+). Mg(2+) serves as cofactor.

The catalysed reaction is riboflavin + ATP = FMN + ADP + H(+). The protein operates within cofactor biosynthesis; FMN biosynthesis; FMN from riboflavin (ATP route): step 1/1. Its function is as follows. Catalyzes the phosphorylation of riboflavin (vitamin B2) to form flavin mononucleotide (FMN) coenzyme. This chain is Riboflavin kinase (fmn1), found in Neurospora crassa (strain ATCC 24698 / 74-OR23-1A / CBS 708.71 / DSM 1257 / FGSC 987).